We begin with the raw amino-acid sequence, 342 residues long: (Lyso)-N-acylphosphatidylethanolamine lipase (342 aa).

The AB hydrolase-1 domain occupies 70–323 (PLVMVHGFGG…EIEGASHHVY (254 aa)).

This sequence belongs to the peptidase S33 family. ABHD4/ABHD5 subfamily. As to expression, highest levels in the CNS and in testis, intermediate levels in liver and kidney. Hardly detectable in heart.

The enzyme catalyses N-hexadecanoyl-1,2-di-(9Z-octadecenoyl)-sn-glycero-3-phosphoethanolamine + H2O = N-hexadecanoyl-1-(9Z-octadecenoyl)-sn-glycero-3-phosphoethanolamine + (9Z)-octadecenoate + H(+). It carries out the reaction an N-acyl-1,2-diacyl-sn-glycero-3-phosphoethanolamine + H2O = N,1-diacyl-sn-glycero-3-phosphoethanolamine + a fatty acid + H(+). It catalyses the reaction N-hexadecanoyl-1-(9Z-octadecenoyl)-sn-glycero-3-phosphoethanolamine + H2O = N-hexadecanoyl-sn-glycero-3-phosphoethanolamine + (9Z)-octadecenoate + H(+). The catalysed reaction is N-octadecanoyl-1-(9Z-octadecenoyl)-sn-glycero-3-phosphoethanolamine + H2O = N-octadecanoyl-sn-glycero-3-phospho-ethanolamine + (9Z)-octadecenoate + H(+). The enzyme catalyses N-eicosanoyl-1-(9Z-octadecenoyl)-sn-glycero-3-phosphoethanolamine + H2O = N-eicosanoyl-sn-glycero-3-phosphoethanolamine + (9Z)-octadecenoate + H(+). It carries out the reaction N,1-di-(9Z-octadecenoyl)-sn-glycero-3-phosphoethanolamine + H2O = N-(9Z-octadecenoyl)-sn-glycero-3-phosphoethanolamine + (9Z)-octadecenoate + H(+). It catalyses the reaction N-(5Z,8Z,11Z,14Z-eicosatetraenoyl)-1-(9Z-octadecenoyl)-sn-glycero-3-phosphoethanolamine + H2O = N-(5Z,8Z,11Z,14Z-eicosatetraenoyl)-sn-glycero-3-phosphoethanolamine + (9Z)-octadecenoate + H(+). The catalysed reaction is 1-octadecanoyl-2-(9Z-octadecenoyl)-sn-glycero-3-phospho-(N-hexadecanoyl)-serine + H2O = 1-octadecanoyl-2-hydroxy-sn-glycero-3-phospho-(N-hexadecanoyl)-serine + (9Z)-octadecenoate + H(+). The enzyme catalyses 1-O-(1Z-octadecenoyl)-2-(9Z-octadecenoyl)-sn-glycero-3-phospho-N-hexadecanoyl-ethanolamine + H2O = 1-O-(1Z-octadecenyl)-sn-glycero-3-phospho-N-hexadecanoyl-ethanolamine + (9Z)-octadecenoate + H(+). It carries out the reaction N,1-diacyl-sn-glycero-3-phosphoethanolamine + H2O = N-acyl-sn-glycero-3-phosphoethanolamine + a fatty acid + H(+). Functionally, lysophospholipase selective for N-acyl phosphatidylethanolamine (NAPE). Contributes to the biosynthesis of N-acyl ethanolamines, including the endocannabinoid anandamide by hydrolyzing the sn-1 and sn-2 acyl chains from N-acyl phosphatidylethanolamine (NAPE) generating glycerophospho-N-acyl ethanolamine (GP-NAE), an intermediate for N-acyl ethanolamine biosynthesis. Hydrolyzes substrates bearing saturated, monounsaturated, polyunsaturated N-acyl chains. Shows no significant activity towards other lysophospholipids, including lysophosphatidylcholine, lysophosphatidylethanolamine and lysophosphatidylserine. The polypeptide is (Lyso)-N-acylphosphatidylethanolamine lipase (Mus musculus (Mouse)).